The primary structure comprises 231 residues: PIAGSMVLAAILLKLGGYGIIRMMQVLPTTKTDMFLPFIVLALWGAVLANLTCLQQTDLKSLIAYSSISHMGLVVATIIIQTPWGLSGAMALMIAHGFTSSALFCLANTTYERTHTRILILTRGFHNILPMATTWWLLANLMNIAIPPTMNFTGELLISSSLFNWCPTTIILLGLSMLITACYSLHMLLSTQMGPTPLNSQTEPTHSREHLLMVLHLAPLMMISMKPELII.

6 helical membrane passes run 1 to 21 (PIAGSMVLAAILLKLGGYGII), 34 to 54 (MFLPFIVLALWGAVLANLTCL), 63 to 85 (IAYSSISHMGLVVATIIIQTPWG), 89 to 111 (AMALMIAHGFTSSALFCLANTTY), 128 to 148 (ILPMATTWWLLANLMNIAIPP), and 169 to 189 (TIILLGLSMLITACYSLHMLL).

This sequence belongs to the complex I subunit 4 family.

It localises to the mitochondrion membrane. The catalysed reaction is a ubiquinone + NADH + 5 H(+)(in) = a ubiquinol + NAD(+) + 4 H(+)(out). Core subunit of the mitochondrial membrane respiratory chain NADH dehydrogenase (Complex I) that is believed to belong to the minimal assembly required for catalysis. Complex I functions in the transfer of electrons from NADH to the respiratory chain. The immediate electron acceptor for the enzyme is believed to be ubiquinone. In Bothrops bilineatus (Green jararaca), this protein is NADH-ubiquinone oxidoreductase chain 4 (MT-ND4).